Consider the following 1227-residue polypeptide: Pentatricopeptide repeat-containing protein At5g15280, mitochondrial (1227 aa).

A mitochondrion-targeting transit peptide spans 1–31 (MLNLLSISSSSRLRFLNKVSSLTYHYSFAFF). 28 PPR repeats span residues 146-180 (LPQACEIMASMLIREGMVKEVELLLMEMERHGDTM), 182-216 (NEGIFCDLIGKYVDDFDSRKAVMLFDWMRRKGLVP), 217-251 (LTSCYQILIDQLVRVHRTESAYRICLDWVETRAEL), 255-289 (NIDSIGKVIELLCLDQKVQEARVLARKLVALGCIL), 290-320 (NSSIYSKITIGYNEKQDFEDLLSFIGEVKYE), 322-356 (DVFVGNRILHSLCRRFGSERAYVYMEELEHLGFKQ), 357-391 (DEVTFGILIGWCCYEGDIKRAVLYLSEIMSKGYKP), 392-426 (DVYSYNAILSGLFRKGLWQHTHCILDEMKENGMML), 427-461 (SLSTFKIMVTGYCKARQFEEAKRIVNKMFGYGLIE), 527-561 (VLPEFNSLIVRASEDGDLQTALRLLDEMARWGQKL), 562-597 (SRRSFAVLMRSLCASRAHLRVSISLLEKWPKLAYQL), 598-632 (DGETLNFLVQEYCKKGFSRHSKLIFHKMVQMHHPI), 633-667 (DNVTYTSLIRCFCKKETLNDLLNVWGAAQNDNWLP), 668-698 (DLNDCGDLWNCLVRKGLVEEVVQLFERVFIS), 703-737 (QSEACRIFVEKLTVLGFSCIAHSVVKRLEGEGCIV), 738-772 (EQEVYNHLIKGLCTEKKDSAAFAILDEMLDKKHIP), 773-800 (SLGSCLMLIPRLCRANKAGTAFNLAEQI), 802-836 (SSYVHYALIKGLSLAGKMLDAENQLRIMLSNGLSS), 837-871 (YNKIYNVMFQGYCKGNNWMKVEEVLGLMVRKNIIC), 872-906 (SVKSYREYVRKMCLEPQSLSAISLKEFLLLGESNP), 908-942 (GVIIYNMLIFYMFRAKNHLEVNKVLLEMQGRGVLP), 943-977 (DETTFNFLVHGYSSSADYSSSLRYLSAMISKGMKP), 978-1012 (NNRSLRAVTSSLCDNGDVKKALDLWQVMESKGWNL), 1014-1044 (SSVVQTKIVETLISKGEIPKAEDFLTRVTRN), 1047-1081 (MAPNYDNIIKKLSDRGNLDIAVHLLNTMLKNQSIP), 1082-1116 (GSSSYDSVINGLLRYNQLDKAMDFHTEMVELGLSP), 1117-1151 (SISTWSGLVHKFCEACQVLESERLIKSMVGLGESP), and 1152-1186 (SQEMFKTVIDRFRVEKNTVKASEMMEMMQKCGYEV).

Belongs to the PPR family. P subfamily.

It localises to the mitochondrion. The polypeptide is Pentatricopeptide repeat-containing protein At5g15280, mitochondrial (Arabidopsis thaliana (Mouse-ear cress)).